The primary structure comprises 152 residues: Ubiquitin-conjugating enzyme E2 2 (152 aa).

Positions 4–150 constitute a UBC core domain; the sequence is PARKRLMRDF…VREVVEQSWT (147 aa). Cys-88 (glycyl thioester intermediate) is an active-site residue.

Belongs to the ubiquitin-conjugating enzyme family. In terms of tissue distribution, expressed in all tissues examined. Lower levels found in leaves.

It carries out the reaction S-ubiquitinyl-[E1 ubiquitin-activating enzyme]-L-cysteine + [E2 ubiquitin-conjugating enzyme]-L-cysteine = [E1 ubiquitin-activating enzyme]-L-cysteine + S-ubiquitinyl-[E2 ubiquitin-conjugating enzyme]-L-cysteine.. The protein operates within protein modification; protein ubiquitination. Its function is as follows. Accepts the ubiquitin from the E1 complex and catalyzes its covalent attachment to other proteins. This is Ubiquitin-conjugating enzyme E2 2 (UBC2) from Arabidopsis thaliana (Mouse-ear cress).